A 90-amino-acid chain; its full sequence is Probable Fe(2+)-trafficking protein (90 aa).

It belongs to the Fe(2+)-trafficking protein family.

Could be a mediator in iron transactions between iron acquisition and iron-requiring processes, such as synthesis and/or repair of Fe-S clusters in biosynthetic enzymes. This chain is Probable Fe(2+)-trafficking protein, found in Polynucleobacter asymbioticus (strain DSM 18221 / CIP 109841 / QLW-P1DMWA-1) (Polynucleobacter necessarius subsp. asymbioticus).